We begin with the raw amino-acid sequence, 350 residues long: Tetraacyldisaccharide 4'-kinase (350 aa).

Residue 48 to 55 (SAGGTGKT) coordinates ATP.

This sequence belongs to the LpxK family.

It carries out the reaction a lipid A disaccharide + ATP = a lipid IVA + ADP + H(+). It functions in the pathway glycolipid biosynthesis; lipid IV(A) biosynthesis; lipid IV(A) from (3R)-3-hydroxytetradecanoyl-[acyl-carrier-protein] and UDP-N-acetyl-alpha-D-glucosamine: step 6/6. Functionally, transfers the gamma-phosphate of ATP to the 4'-position of a tetraacyldisaccharide 1-phosphate intermediate (termed DS-1-P) to form tetraacyldisaccharide 1,4'-bis-phosphate (lipid IVA). This is Tetraacyldisaccharide 4'-kinase from Chlorobium limicola (strain DSM 245 / NBRC 103803 / 6330).